The following is a 971-amino-acid chain: Kinesin-like protein KIN-6 (971 aa).

2 disordered regions span residues 1–44 (MEEK…SSLA) and 93–121 (TTTT…RNPE). Over residues 29-39 (ATPFTTTTKPP) the composition is skewed to low complexity. The Kinesin motor domain occupies 76–460 (SLKIFLRIKP…LRQASPYMKI (385 aa)). Residue 202 to 209 (GPSGSGKT) coordinates ATP. Residues 700 to 709 (RREAGSEESS) show a composition bias toward basic and acidic residues. Disordered stretches follow at residues 700–856 (RREA…TEEM) and 872–917 (KTTN…RLQP). Polar residues predominate over residues 768-783 (QSVNSEENVGIPSTIT). Residues 785–797 (VEAEVTDFQRDQN) are compositionally biased toward basic and acidic residues. Residues 809 to 827 (EVSQDCINSGLSNVQTKSA) show a composition bias toward polar residues. The span at 831-842 (RFPDSEKQERNR) shows a compositional bias: basic and acidic residues. The span at 903–915 (KKQKNGQKPKRRL) shows a compositional bias: basic residues.

This sequence belongs to the TRAFAC class myosin-kinesin ATPase superfamily. Kinesin family. KIN-6 subfamily.

This is Kinesin-like protein KIN-6 from Arabidopsis thaliana (Mouse-ear cress).